Reading from the N-terminus, the 110-residue chain is Protein NATD1 (110 aa).

In terms of domain architecture, N-acetyltransferase spans 19–109 (EHDRKRRQFT…PLPQYLEHLQ (91 aa)).

It belongs to the NATD1 family.

This chain is Protein NATD1 (NATD1), found in Gallus gallus (Chicken).